The chain runs to 418 residues: Histidine--tRNA ligase (418 aa).

It belongs to the class-II aminoacyl-tRNA synthetase family. As to quaternary structure, homodimer.

The protein localises to the cytoplasm. The catalysed reaction is tRNA(His) + L-histidine + ATP = L-histidyl-tRNA(His) + AMP + diphosphate + H(+). The protein is Histidine--tRNA ligase of Thermoanaerobacter pseudethanolicus (strain ATCC 33223 / 39E) (Clostridium thermohydrosulfuricum).